Consider the following 203-residue polypeptide: UPF0637 protein MCCL_0722 (203 aa).

This sequence belongs to the UPF0637 family.

This is UPF0637 protein MCCL_0722 from Macrococcus caseolyticus (strain JCSC5402) (Macrococcoides caseolyticum).